Reading from the N-terminus, the 172-residue chain is Mesogenin-1 (172 aa).

The segment at 1–69 is disordered; sequence METLHHPLVK…SPYSSSSHTQ (69 aa). Polar residues predominate over residues 18–29; sequence SSDSEPNSSCMA. The segment covering 42–66 has biased composition (low complexity); sequence SLSQTPSPQSLSPAVSYESPYSSSS. One can recognise a bHLH domain in the interval 108–162; it reads QRRRKASEREKLRMRAIAEALHTLRNNLPPMYSQGRQPLTKIQTLKCTINYISEL.

It is found in the nucleus. Involved in specifying the paraxial, but not dorsal, mesoderm. May regulate the expression of T-box transcription factors required for mesoderm formation and differentiation, such as brachyury T, wnt8, vegt and eomes. In Xenopus tropicalis (Western clawed frog), this protein is Mesogenin-1 (msgn1).